A 168-amino-acid polypeptide reads, in one-letter code: G/U mismatch-specific DNA glycosylase (168 aa).

It belongs to the uracil-DNA glycosylase (UDG) superfamily. TDG/mug family. Binds DNA as a monomer.

Its subcellular location is the cytoplasm. The catalysed reaction is Specifically hydrolyzes mismatched double-stranded DNA and polynucleotides, releasing free uracil.. Excises ethenocytosine and uracil, which can arise by alkylation or deamination of cytosine, respectively, from the corresponding mispairs with guanine in ds-DNA. It is capable of hydrolyzing the carbon-nitrogen bond between the sugar-phosphate backbone of the DNA and the mispaired base. The complementary strand guanine functions in substrate recognition. Required for DNA damage lesion repair in stationary-phase cells. The chain is G/U mismatch-specific DNA glycosylase from Escherichia coli O157:H7 (strain EC4115 / EHEC).